Consider the following 582-residue polypeptide: Membrane-bound O-acyltransferase GUP1 (582 aa).

Residues 1–61 (MVIPRYHLIP…IIKQANPKSR (61 aa)) lie on the Extracellular side of the membrane. A helical membrane pass occupies residues 62–82 (WSTIEFKFYYLVFLIIVPLMF). Over 83-121 (KAGMESANENNPNYPKYEHLLSNGWIFGRKVDNSDQQYR) the chain is Cytoplasmic. Residues 122 to 144 (FFRNNFPLLCLLIIIHVGLRRVI) traverse the membrane as a helical segment. Over 145-158 (NRIIPLSSKRTYFD) the chain is Extracellular. Residues 159-179 (FIFGIIFLIGAHGVNVLKLSI) form a helical membrane-spanning segment. Topologically, residues 180–195 (HLLINYLIGKYIKNYK) are cytoplasmic. The chain crosses the membrane as a helical span at residues 196 to 216 (LSLWITWIYGISSLFFNEWYG). Residues 217-294 (NYTLGLSFLS…TAPLPIEDYN (78 aa)) lie on the Extracellular side of the membrane. A helical transmembrane segment spans residues 295-315 (IFNYISYLTYTPLFIAGPILT). Residues 316–343 (FNDYIYQSNYQQSSSTKDYHRIMMYLIR) are Cytoplasmic-facing. Residues 344-364 (FIFCLLTLEFILHFMYVVAAS) traverse the membrane as a helical segment. The Extracellular portion of the chain corresponds to 365 to 373 (KTKSWEGNL). A helical membrane pass occupies residues 374 to 394 (PFQISMLGMFNLNIIWLKLLI). Topologically, residues 395–454 (PWRLFRLWSLLDGIDPPENMIRCMDNNFSALAFWRAWHRSYNRWIIRYIYLPMGGGGKYR) are cytoplasmic. Transmembrane regions (helical) follow at residues 455–475 (ILNSLLVFSFVAIWHDIELKL) and 476–496 (LMWGWLVVLFLIPEISVTMIF). H469 is a catalytic residue. Over 497–507 (KKYRNQWWYRH) the chain is Cytoplasmic. Residues 508–528 (LCGVGAVINIWMMMIANLVGF) traverse the membrane as a helical segment. Residues 529-548 (CLGTDGMWKLLHDLFKTFDG) are Extracellular-facing. A helical transmembrane segment spans residues 549–569 (VRFLIISSGALFVGAQIMFEI). Residues 570–582 (RESEMRKGINVRC) are Cytoplasmic-facing.

Belongs to the membrane-bound acyltransferase family.

The protein resides in the cell membrane. The protein localises to the endoplasmic reticulum membrane. It is found in the mitochondrion membrane. Membrane-bound O-acyltransferase involved in the remodeling of glycosylphosphatidylinositol (GPI) anchors. Acts only on GPI-anchored proteins, but not on free GPI lipids. Also involved in lipid metabolism, having profound effects on sphingolipid-sterol-ordered domains integrity and assembly. Involved in cell integrity and apoptosis. The polypeptide is Membrane-bound O-acyltransferase GUP1 (GUP1) (Candida tropicalis (Yeast)).